Reading from the N-terminus, the 556-residue chain is Formate--tetrahydrofolate ligase 2 (556 aa).

65–72 contacts ATP; that stretch reads TPAGEGKS.

The protein belongs to the formate--tetrahydrofolate ligase family.

The enzyme catalyses (6S)-5,6,7,8-tetrahydrofolate + formate + ATP = (6R)-10-formyltetrahydrofolate + ADP + phosphate. It participates in one-carbon metabolism; tetrahydrofolate interconversion. The polypeptide is Formate--tetrahydrofolate ligase 2 (Streptococcus sanguinis (strain SK36)).